We begin with the raw amino-acid sequence, 855 residues long: MTARGTRKNYQRLWRWGTMLLGMLMICSAAENLWVTVYYGVPVWKEATTTLFCASDARAYATEVHNVWATHACVPTDPNPQEVVLGNVTENFDMWKNNMVEQMQEDIISLWDQSLKPCVKLTPLCVTLDCTDVNTTSSSLRNATNTTSSSWETMEKGELKNCSFNTTTSIRDKMQEQYALFYKLDVLPIDKNDTKFRLIHCNTSTITQACPKISFEPIPMHYCTPAGFAILKCNDKKFNGTGPCTNVSTVQCTHGIKPVVSTQLLLNGSLAEEEVIIRSSNFTNNAKIIIVQLNKSVEINCTRPNNNTRNRISIGPGRAFHTTKQIIGDIRQAHCNLSRATWEKTLEQIATKLRKQFRNKTIAFDRSSGGDPEIVMHSFNCGGEFFYCNTSQLFNSTWNDTTRANSTEVTITLPCRIKQIVNMWQEVGKAMYAPPISGQIRCSSKITGLLLTRDGGKNTTNGIEIFRPAGGDMRDNWRSELYKYKVVKIEPLGVAPTKARRRVVQREKRAVGMLGAMFLGFLGAAGSTMGARSMTLTVQARQLLSGIVQQQNNLLRAIEAQQHLLQLTVWGIKQLQARVLAVERYLKDQQLLGIWGCSGKLICTTTVPWNASWSNKSLNEIWDNMTWMQWEREIDNYTHLIYTLIEESQNQQEKNEQELLELDKWAGLWSWFSITNWLWYIRIFIIIVGGLVGLRIVFAVLSIVNRVRQGYSPLSFQTRLPTQRGPDRPEGIEEEGGERDRDRSGRLVDGFLALIWDDLRSLCLFSYHRLRDLILIVARIVELLGRRGWEVLKYWWNLLQYWSQELKNSVISLLNATAIAVAEGTDRVIEIVQRAYRAFLNIPRRIRQGLERALL.

The signal sequence occupies residues 1 to 31 (MTARGTRKNYQRLWRWGTMLLGMLMICSAAE). The Extracellular portion of the chain corresponds to 32-683 (NLWVTVYYGV…ITNWLWYIRI (652 aa)). Cys53 and Cys73 are oxidised to a cystine. 17 N-linked (GlcNAc...) asparagine; by host glycosylation sites follow: Asn87, Asn134, Asn142, Asn145, Asn161, Asn165, Asn192, Asn202, Asn239, Asn246, Asn267, Asn281, Asn294, Asn300, Asn306, Asn336, and Asn359. 5 disulfides stabilise this stretch: Cys118/Cys210, Cys125/Cys201, Cys130/Cys162, Cys223/Cys252, and Cys233/Cys244. The V1 stretch occupies residues 130-161 (CTDVNTTSSSLRNATNTTSSSWETMEKGELKN). A V2 region spans residues 162–201 (CSFNTTTSIRDKMQEQYALFYKLDVLPIDKNDTKFRLIHC). The interval 301-334 (CTRPNNNTRNRISIGPGRAFHTTKQIIGDIRQAH) is V3. Residues Cys301 and Cys335 are joined by a disulfide bond. Positions 367–377 (SSGGDPEIVMH) are CD4-binding loop. Disulfide bonds link Cys381-Cys442 and Cys388-Cys415. The segment at 388 to 415 (CNTSQLFNSTWNDTTRANSTEVTITLPC) is V4. N-linked (GlcNAc...) asparagine; by host glycans are attached at residues Asn389, Asn395, Asn399, Asn405, and Asn458. V5 regions lie at residues 458-469 (NTTNGIEIFRPA) and 460-469 (TNGIEIFRPA). A fusion peptide region spans residues 510–531 (AVGMLGAMFLGFLGAAGSTMGA). Residues 573–591 (KQLQARVLAVERYLKDQQL) are immunosuppression. A disulfide bridge links Cys597 with Cys603. Residues Asn610, Asn615, Asn624, and Asn636 are each glycosylated (N-linked (GlcNAc...) asparagine; by host). A coiled-coil region spans residues 632 to 666 (REIDNYTHLIYTLIEESQNQQEKNEQELLELDKWA). The segment at 661–682 (ELDKWAGLWSWFSITNWLWYIR) is MPER; binding to GalCer. Residues 684–704 (FIIIVGGLVGLRIVFAVLSIV) form a helical membrane-spanning segment. Residues 705-855 (NRVRQGYSPL…IRQGLERALL (151 aa)) are Cytoplasmic-facing. The YXXL motif; contains endocytosis signal motif lies at 711 to 714 (YSPL). The segment at 718-742 (TRLPTQRGPDRPEGIEEEGGERDRD) is disordered. Cys763 carries the S-palmitoyl cysteine; by host lipid modification. The Di-leucine internalization motif motif lies at 854-855 (LL).

It belongs to the HIV-1 env protein family. As to quaternary structure, the mature envelope protein (Env) consists of a homotrimer of non-covalently associated gp120-gp41 heterodimers. The resulting complex protrudes from the virus surface as a spike. There seems to be as few as 10 spikes on the average virion. Interacts with host CD4, CCR5 and CXCR4. Gp120 also interacts with the C-type lectins CD209/DC-SIGN and CLEC4M/DC-SIGNR (collectively referred to as DC-SIGN(R)). Gp120 and gp41 interact with GalCer. Gp120 interacts with host ITGA4/ITGB7 complex; on CD4+ T-cells, this interaction results in rapid activation of integrin ITGAL/LFA-1, which facilitates efficient cell-to-cell spreading of HIV-1. Gp120 interacts with cell-associated heparan sulfate; this interaction increases virus infectivity on permissive cells and may be involved in infection of CD4- cells. In terms of assembly, the mature envelope protein (Env) consists of a homotrimer of non-covalently associated gp120-gp41 heterodimers. The resulting complex protrudes from the virus surface as a spike. There seems to be as few as 10 spikes on the average virion. In terms of processing, highly glycosylated by host. The high number of glycan on the protein is reffered to as 'glycan shield' because it contributes to hide protein sequence from adaptive immune system. Palmitoylation of the transmembrane protein and of Env polyprotein (prior to its proteolytic cleavage) is essential for their association with host cell membrane lipid rafts. Palmitoylation is therefore required for envelope trafficking to classical lipid rafts, but not for viral replication. Post-translationally, specific enzymatic cleavages in vivo yield mature proteins. Envelope glycoproteins are synthesized as an inactive precursor that is heavily N-glycosylated and processed likely by host cell furin in the Golgi to yield the mature SU and TM proteins. The cleavage site between SU and TM requires the minimal sequence [KR]-X-[KR]-R. About 2 of the 9 disulfide bonds of gp41 are reduced by P4HB/PDI, following binding to CD4 receptor.

It localises to the virion membrane. It is found in the host cell membrane. The protein resides in the host endosome membrane. Its function is as follows. Oligomerizes in the host endoplasmic reticulum into predominantly trimers. In a second time, gp160 transits in the host Golgi, where glycosylation is completed. The precursor is then proteolytically cleaved in the trans-Golgi and thereby activated by cellular furin or furin-like proteases to produce gp120 and gp41. In terms of biological role, attaches the virus to the host lymphoid cell by binding to the primary receptor CD4. This interaction induces a structural rearrangement creating a high affinity binding site for a chemokine coreceptor like CXCR4 and/or CCR5. Acts as a ligand for CD209/DC-SIGN and CLEC4M/DC-SIGNR, which are respectively found on dendritic cells (DCs), and on endothelial cells of liver sinusoids and lymph node sinuses. These interactions allow capture of viral particles at mucosal surfaces by these cells and subsequent transmission to permissive cells. HIV subverts the migration properties of dendritic cells to gain access to CD4+ T-cells in lymph nodes. Virus transmission to permissive T-cells occurs either in trans (without DCs infection, through viral capture and transmission), or in cis (following DCs productive infection, through the usual CD4-gp120 interaction), thereby inducing a robust infection. In trans infection, bound virions remain infectious over days and it is proposed that they are not degraded, but protected in non-lysosomal acidic organelles within the DCs close to the cell membrane thus contributing to the viral infectious potential during DCs' migration from the periphery to the lymphoid tissues. On arrival at lymphoid tissues, intact virions recycle back to DCs' cell surface allowing virus transmission to CD4+ T-cells. Functionally, acts as a class I viral fusion protein. Under the current model, the protein has at least 3 conformational states: pre-fusion native state, pre-hairpin intermediate state, and post-fusion hairpin state. During fusion of viral and target intracellular membranes, the coiled coil regions (heptad repeats) assume a trimer-of-hairpins structure, positioning the fusion peptide in close proximity to the C-terminal region of the ectodomain. The formation of this structure appears to drive apposition and subsequent fusion of viral and target cell membranes. Complete fusion occurs in host cell endosomes and is dynamin-dependent, however some lipid transfer might occur at the plasma membrane. The virus undergoes clathrin-dependent internalization long before endosomal fusion, thus minimizing the surface exposure of conserved viral epitopes during fusion and reducing the efficacy of inhibitors targeting these epitopes. Membranes fusion leads to delivery of the nucleocapsid into the cytoplasm. The protein is Envelope glycoprotein gp160 of Homo sapiens (Human).